Here is a 195-residue protein sequence, read N- to C-terminus: Thymidine kinase (195 aa).

ATP-binding positions include 15-22 and 88-91; these read GSMFSGKS and DEVQ. Residue Glu-89 is the Proton acceptor of the active site. Zn(2+) contacts are provided by Cys-145, Cys-148, Cys-183, and Cys-186.

This sequence belongs to the thymidine kinase family. Homotetramer.

The protein localises to the cytoplasm. The catalysed reaction is thymidine + ATP = dTMP + ADP + H(+). This Bacillus cereus (strain 03BB102) protein is Thymidine kinase.